We begin with the raw amino-acid sequence, 86 residues long: Large ribosomal subunit protein bL27c (86 aa).

Residues 1–20 (MAHKKGSGSTRNGRDSNAQR) are disordered. The span at 7–19 (SGSTRNGRDSNAQ) shows a compositional bias: polar residues.

Belongs to the bacterial ribosomal protein bL27 family.

It is found in the plastid. The protein resides in the chloroplast. This Guillardia theta (Cryptophyte) protein is Large ribosomal subunit protein bL27c (rpl27).